We begin with the raw amino-acid sequence, 81 residues long: UPF0386 protein Smed_0945 (81 aa).

The protein belongs to the UPF0386 family.

The sequence is that of UPF0386 protein Smed_0945 from Sinorhizobium medicae (strain WSM419) (Ensifer medicae).